Consider the following 363-residue polypeptide: uncharacterized protein (363 aa).

4 helical membrane-spanning segments follow: residues 34 to 54 (YVYDIALIAISILCIVSIILW), 60 to 80 (LALFAIAPALAIGALGVTLLV), 91 to 111 (EIADTVAAVSLPFILTGTAAG), and 112 to 132 (LMFSAIAVGGGAVILANPLFL). Positions 232-245 (SSTTTHSTDSEQIL) are enriched in polar residues. The tract at residues 232 to 363 (SSTTTHSTDS…SSQKKKPSRK (132 aa)) is disordered. Low complexity-rich tracts occupy residues 246–268 (TSVSPQSSDTESSSSSSFHTPPN) and 275–285 (DSNSSDSSSSS). Residues 322 to 342 (SRSERNAQHHRNKDQEQRQDS) show a composition bias toward basic and acidic residues.

This sequence belongs to the chlamydial CPn_0443/CT_005/TC_0273 family.

Its subcellular location is the cell membrane. This is an uncharacterized protein from Chlamydia trachomatis serovar D (strain ATCC VR-885 / DSM 19411 / UW-3/Cx).